Consider the following 423-residue polypeptide: Diaminobutyrate--2-oxoglutarate transaminase (423 aa).

An N6-(pyridoxal phosphate)lysine modification is found at Lys271.

This sequence belongs to the class-III pyridoxal-phosphate-dependent aminotransferase family. It depends on pyridoxal 5'-phosphate as a cofactor.

It catalyses the reaction L-2,4-diaminobutanoate + 2-oxoglutarate = L-aspartate 4-semialdehyde + L-glutamate. It functions in the pathway amine and polyamine biosynthesis; ectoine biosynthesis; L-ectoine from L-aspartate 4-semialdehyde: step 1/3. Functionally, catalyzes reversively the conversion of L-aspartate beta-semialdehyde (ASA) to L-2,4-diaminobutyrate (DABA) by transamination with L-glutamate. In Streptomyces avermitilis (strain ATCC 31267 / DSM 46492 / JCM 5070 / NBRC 14893 / NCIMB 12804 / NRRL 8165 / MA-4680), this protein is Diaminobutyrate--2-oxoglutarate transaminase (ectB).